A 244-amino-acid chain; its full sequence is Probable phosphatase CA_C0509 (244 aa).

The Zn(2+) site is built by H8, H10, H16, H41, E74, H102, H132, D193, and H195.

Belongs to the PHP family. Requires Zn(2+) as cofactor.

This is Probable phosphatase CA_C0509 from Clostridium acetobutylicum (strain ATCC 824 / DSM 792 / JCM 1419 / IAM 19013 / LMG 5710 / NBRC 13948 / NRRL B-527 / VKM B-1787 / 2291 / W).